Reading from the N-terminus, the 134-residue chain is Large ribosomal subunit protein eL32 (134 aa).

Belongs to the eukaryotic ribosomal protein eL32 family.

The polypeptide is Large ribosomal subunit protein eL32 (RpL32) (Drosophila bifasciata (Fruit fly)).